A 66-amino-acid chain; its full sequence is Neurotoxin-like protein STR1 (66 aa).

Residues 2–65 enclose the LCN-type CS-alpha/beta domain; the sequence is RDGYIVHDGT…VWGEDGFMCW (64 aa). Intrachain disulfides connect Cys-13/Cys-64, Cys-17/Cys-40, Cys-26/Cys-45, and Cys-30/Cys-47.

The protein belongs to the long (4 C-C) scorpion toxin superfamily. Sodium channel inhibitor family. Beta subfamily. As to expression, expressed by the venom gland.

The protein resides in the secreted. In terms of biological role, this protein is not toxic. This chain is Neurotoxin-like protein STR1, found in Androctonus australis (Sahara scorpion).